A 355-amino-acid polypeptide reads, in one-letter code: Probable sugar phosphate/phosphate translocator At3g10290 (355 aa).

A disordered region spans residues 19–51; it reads QKKQPNLSISSTTKMNKKNPDQKSDMSSSSSSP. Residues 22 to 32 show a composition bias toward polar residues; that stretch reads QPNLSISSTTK. The next 10 membrane-spanning stretches (helical) occupy residues 55 to 75, 89 to 109, 124 to 144, 150 to 170, 177 to 197, 198 to 218, 239 to 259, 277 to 297, 305 to 325, and 328 to 348; these read TLFISSLIILWYTSNIGVLLL, IFLTMCHMSACAILSYVSIVF, FLKVATLSIVFCASVVGGNIS, VSFNQAVGATTPFFTALFAYI, AWVTYGALVPVVTGVVIASGG, EPGFHWFGFIMCISATAARAF, LMLYMSPIAVIALLPVTIFME, YILLLVNSVMAYSANLLNFLV, TLQVLGNAKGAVAVVISILLF, and PVTVMGIGGYSITVLGVVAYG.

Belongs to the TPT transporter family. TPT (TC 2.A.7.9) subfamily.

The protein resides in the membrane. This Arabidopsis thaliana (Mouse-ear cress) protein is Probable sugar phosphate/phosphate translocator At3g10290.